The sequence spans 338 residues: MTDSNLLGLTCWLIDTRTLWPGQHIKDAASDILHLLSNDERNAVLRKIFIADARMSLASALLKRLYISRALNIPWRDVKIARKGDPTHGKPCAVLPDGSFAPIDFNVSHQAGLVSLVGWNPPPGQSQSALVGTDIVCVNERDDYRTIDQEGFDAWIDIYEDVFSEAERWDMKYNVDYITLLDGRIIQGNSLGRVDRCVRRNKDLSITLPTGETHSFNSDLLIDAKLRRFYSFFCYKEAYIKLAGEALLAPWLKELEFQNVKSPKPGTVARCSTHGTWGEKVSDVEVVLHGEKVEDVKMTLQAFEENFMLATAVQGLRDLEAPPFTKLNLENDVVAFAS.

This sequence belongs to the P-Pant transferase superfamily.

The catalysed reaction is apo-[ACP] + CoA = holo-[ACP] + adenosine 3',5'-bisphosphate + H(+). Its function is as follows. Acyl-carrier-protein synthase that transfers the 4'-phosphopantetheine moiety from coenzyme A to a Ser of an acyl-carrier-protein. The 4'-phosphopantetheine (4'-PPT) portion of CoA provides the essential prosthetic group for a number of carrier proteins and multi-domain enzymes, priming them for the acceptance of acyl building blocks in fatty acid synthesis and many aspects of secondary metabolism mediated by polyketide synthases (PKSs) and non-ribosomal peptide synthetases (NRPSs). Plays a key role in liamocins biosynthesis by activationg the HR-PKS PKS1 that produces 3,5-dihydroxydecanoic acid, a precursor of liamocins. This chain is 4'-phosphopantetheinyl transferase, found in Aureobasidium melanogenum (Aureobasidium pullulans var. melanogenum).